The chain runs to 302 residues: Acetylglutamate kinase (302 aa).

Substrate-binding positions include 68–69 (GG), R90, and N194.

This sequence belongs to the acetylglutamate kinase family. ArgB subfamily.

The protein localises to the cytoplasm. The catalysed reaction is N-acetyl-L-glutamate + ATP = N-acetyl-L-glutamyl 5-phosphate + ADP. It participates in amino-acid biosynthesis; L-arginine biosynthesis; N(2)-acetyl-L-ornithine from L-glutamate: step 2/4. Its function is as follows. Catalyzes the ATP-dependent phosphorylation of N-acetyl-L-glutamate. The chain is Acetylglutamate kinase from Acinetobacter baumannii (strain AB307-0294).